The primary structure comprises 132 residues: UPF0102 protein Achl_2213 (132 aa).

This sequence belongs to the UPF0102 family.

This Pseudarthrobacter chlorophenolicus (strain ATCC 700700 / DSM 12829 / CIP 107037 / JCM 12360 / KCTC 9906 / NCIMB 13794 / A6) (Arthrobacter chlorophenolicus) protein is UPF0102 protein Achl_2213.